We begin with the raw amino-acid sequence, 529 residues long: Glucose-6-phosphate isomerase (529 aa).

The active-site Proton donor is Glu322. Catalysis depends on residues His351 and Lys455.

This sequence belongs to the GPI family.

The protein resides in the cytoplasm. It carries out the reaction alpha-D-glucose 6-phosphate = beta-D-fructose 6-phosphate. The protein operates within carbohydrate biosynthesis; gluconeogenesis. It functions in the pathway carbohydrate degradation; glycolysis; D-glyceraldehyde 3-phosphate and glycerone phosphate from D-glucose: step 2/4. Functionally, catalyzes the reversible isomerization of glucose-6-phosphate to fructose-6-phosphate. The chain is Glucose-6-phosphate isomerase from Acaryochloris marina (strain MBIC 11017).